The primary structure comprises 336 residues: Aspartate--ammonia ligase (336 aa).

This sequence belongs to the class-II aminoacyl-tRNA synthetase family. AsnA subfamily.

Its subcellular location is the cytoplasm. It carries out the reaction L-aspartate + NH4(+) + ATP = L-asparagine + AMP + diphosphate + H(+). Its pathway is amino-acid biosynthesis; L-asparagine biosynthesis; L-asparagine from L-aspartate (ammonia route): step 1/1. The polypeptide is Aspartate--ammonia ligase (Lactobacillus acidophilus (strain ATCC 700396 / NCK56 / N2 / NCFM)).